The primary structure comprises 89 residues: Small ribosomal subunit protein uS15 (89 aa).

A compositionally biased stretch (basic and acidic residues) spans 1 to 20 (MSITAERKAELIKTHARGEA). The interval 1–24 (MSITAERKAELIKTHARGEADTGS) is disordered.

Belongs to the universal ribosomal protein uS15 family. In terms of assembly, part of the 30S ribosomal subunit. Forms a bridge to the 50S subunit in the 70S ribosome, contacting the 23S rRNA.

Functionally, one of the primary rRNA binding proteins, it binds directly to 16S rRNA where it helps nucleate assembly of the platform of the 30S subunit by binding and bridging several RNA helices of the 16S rRNA. In terms of biological role, forms an intersubunit bridge (bridge B4) with the 23S rRNA of the 50S subunit in the ribosome. The chain is Small ribosomal subunit protein uS15 from Phenylobacterium zucineum (strain HLK1).